We begin with the raw amino-acid sequence, 322 residues long: Phospholipase A1 (322 aa).

Residues 1 to 18 form the signal peptide; that stretch reads MNFKYSILFICFGTLDRG. A disulfide bridge links Cys23 with Cys106. The active-site Nucleophile is the Ser156. Residue Asp184 is the Charge relay system of the active site. 2 cysteine pairs are disulfide-bonded: Cys195–Cys200 and Cys238–Cys246. His248 serves as the catalytic Charge relay system. 3 disulfides stabilise this stretch: Cys263-Cys290, Cys264-Cys315, and Cys283-Cys288.

It belongs to the AB hydrolase superfamily. Lipase family. In terms of processing, contains six disulfide bonds. Post-translationally, is not glycosylated. As to expression, expressed by the venom gland.

It localises to the secreted. The enzyme catalyses a 1,2-diacyl-sn-glycero-3-phosphocholine + H2O = a 2-acyl-sn-glycero-3-phosphocholine + a fatty acid + H(+). Its function is as follows. Catalyzes the hydrolysis of phosphatidylcholine with phospholipase A1 activity. Shows hemolytic activity. Acts as an allergen. The chain is Phospholipase A1 from Polybia paulista (Neotropical social wasp).